We begin with the raw amino-acid sequence, 82 residues long: Immediate early response 3-interacting protein 1 (82 aa).

2 helical membrane-spanning segments follow: residues 2-22 and 62-82; these read AFTL…IAVL and VMRV…LLFG.

This sequence belongs to the YOS1 family.

It is found in the endoplasmic reticulum membrane. Functionally, regulator of endoplasmic reticulum secretion that acts as a key determinant of brain size. Required for secretion of extracellular matrix proteins. Required for correct brain development by depositing sufficient extracellular matrix proteins for tissue integrity and the proliferation of neural progenitors. Acts as a regulator of the unfolded protein response (UPR). This chain is Immediate early response 3-interacting protein 1, found in Mus musculus (Mouse).